The chain runs to 657 residues: Kinesin-like protein KIF22 (657 aa).

Positions 1–33 (MNVRAKKKPQQREMASASSGPSRSLSKGGVSRR) are disordered. The span at 16–33 (SASSGPSRSLSKGGVSRR) shows a compositional bias: low complexity. Positions 38 to 360 (RVRVAVRLRP…LNFTARSKEV (323 aa)) constitute a Kinesin motor domain. 119 to 126 (GPTGAGKT) lines the ATP pocket. The disordered stretch occupies residues 388-415 (PSEAKKAKGPEEESTGSPESTAAPASAS). Residues 402 to 415 (TGSPESTAAPASAS) show a composition bias toward low complexity. Ser404, Ser419, and Ser444 each carry phosphoserine. Lys457 is covalently cross-linked (Glycyl lysine isopeptide (Lys-Gly) (interchain with G-Cter in SUMO2)). Residues 457–502 (KRERMVLIKTVEEKNLEIERLKMKQKELEAKVLAQEALDPKEKENT) adopt a coiled-coil conformation. Phosphoserine is present on residues Ser537, Ser554, and Ser573.

It belongs to the TRAFAC class myosin-kinesin ATPase superfamily. Kinesin family. In terms of assembly, interacts with FAM83D and SIAH1. Ubiquitinated; mediated by SIAH1 and leading to its subsequent proteasomal degradation.

The protein localises to the nucleus. It is found in the cytoplasm. It localises to the cytoskeleton. Its function is as follows. Kinesin family member that is involved in spindle formation and the movements of chromosomes during mitosis and meiosis. Binds to microtubules and to DNA. Plays a role in congression of laterally attached chromosomes in NDC80-depleted cells. The chain is Kinesin-like protein KIF22 (Kif22) from Rattus norvegicus (Rat).